Here is a 145-residue protein sequence, read N- to C-terminus: NADH-quinone oxidoreductase subunit A 1 (145 aa).

Helical transmembrane passes span 18 to 38, 71 to 91, and 104 to 124; these read ILPLGLYVAATVLLIGILLLA, VPFYLVAIFFIVFDVEAVFIF, and GLIHITAFIIVLLLGLVWLWL.

Belongs to the complex I subunit 3 family. NDH-1 is composed of 14 different subunits. Subunits NuoA, H, J, K, L, M, N constitute the membrane sector of the complex.

It localises to the cell inner membrane. It catalyses the reaction a quinone + NADH + 5 H(+)(in) = a quinol + NAD(+) + 4 H(+)(out). Functionally, NDH-1 shuttles electrons from NADH, via FMN and iron-sulfur (Fe-S) centers, to quinones in the respiratory chain. The immediate electron acceptor for the enzyme in this species is believed to be ubiquinone. Couples the redox reaction to proton translocation (for every two electrons transferred, four hydrogen ions are translocated across the cytoplasmic membrane), and thus conserves the redox energy in a proton gradient. The chain is NADH-quinone oxidoreductase subunit A 1 from Geotalea uraniireducens (strain Rf4) (Geobacter uraniireducens).